The following is a 135-amino-acid chain: Early E3 15.3 kDa protein (135 aa).

It belongs to the adenoviridae E3_15 family.

Its function is as follows. Protects virus-infected cells from TNF-induced cytolysis. The chain is Early E3 15.3 kDa protein from Human adenovirus B serotype 7 (HAdV-7).